Here is a 596-residue protein sequence, read N- to C-terminus: Neuroepithelial cell-transforming gene 1 protein (596 aa).

The residue at position 1 (M1) is an N-acetylmethionine. The disordered stretch occupies residues 1–44 (MEPELAAQKQPRPRRRSRRASGLSTEGATGPSADTSGSELDGRC). The interval 1-74 (MEPELAAQKQ…LKRKRREKDD (74 aa)) is necessary for nuclear localization. The short motif at 12 to 19 (RPRRRSRR) is the Nuclear localization signal element. 2 positions are modified to phosphoserine: S21 and S32. Positions 22-38 (GLSTEGATGPSADTSGS) are enriched in polar residues. The short motif at 66–72 (KRKRREK) is the Nuclear localization signal element. S100, S106, and S122 each carry phosphoserine. Positions 127–146 (GDHRSPASAQKFSSRSTVPT) are disordered. Residues 133-145 (ASAQKFSSRSTVP) are compositionally biased toward polar residues. A DH domain is found at 174 to 356 (RRQEAIYEMS…QGVLSDINLK (183 aa)). The 116-residue stretch at 386–501 (VLLCHGELRS…WFNCIRAAIA (116 aa)) folds into the PH domain. S508 is modified (phosphoserine). The segment at 562-596 (MAEDSKSLKTHQTQPGIRRARDKALSGGKRKETLV) is disordered.

In terms of assembly, interacts with RHOA in its GTP- and GDP-bound states, and with CDC42 in its GTP-bound state. Interacts with the PDZ 1 domain of BAIAP1. In terms of tissue distribution, widely expressed.

It localises to the cytoplasm. The protein localises to the nucleus. In terms of biological role, acts as a guanine nucleotide exchange factor (GEF) for RhoA GTPase. May be involved in activation of the SAPK/JNK pathway Stimulates genotoxic stress-induced RHOB activity in breast cancer cells leading to their cell death. The chain is Neuroepithelial cell-transforming gene 1 protein (NET1) from Homo sapiens (Human).